A 424-amino-acid chain; its full sequence is Adenosylmethionine-8-amino-7-oxononanoate aminotransferase (424 aa).

Residue Trp46 participates in substrate binding. Position 106 to 107 (106 to 107) interacts with pyridoxal 5'-phosphate; that stretch reads GS. Tyr138 provides a ligand contact to substrate. Position 240 (Asp240) interacts with pyridoxal 5'-phosphate. The substrate site is built by Lys269 and Gly303. An N6-(pyridoxal phosphate)lysine modification is found at Lys269. Position 304 to 305 (304 to 305) interacts with pyridoxal 5'-phosphate; that stretch reads HS. Arg391 provides a ligand contact to substrate.

It belongs to the class-III pyridoxal-phosphate-dependent aminotransferase family. BioA subfamily. As to quaternary structure, homodimer. Pyridoxal 5'-phosphate serves as cofactor.

The protein resides in the cytoplasm. It carries out the reaction (8S)-8-amino-7-oxononanoate + S-adenosyl-L-methionine = S-adenosyl-4-methylsulfanyl-2-oxobutanoate + (7R,8S)-7,8-diammoniononanoate. It functions in the pathway cofactor biosynthesis; biotin biosynthesis; 7,8-diaminononanoate from 8-amino-7-oxononanoate (SAM route): step 1/1. In terms of biological role, catalyzes the transfer of the alpha-amino group from S-adenosyl-L-methionine (SAM) to 7-keto-8-aminopelargonic acid (KAPA) to form 7,8-diaminopelargonic acid (DAPA). It is the only aminotransferase known to utilize SAM as an amino donor. Complements a bioU deletion in Synechocystis PCC 6803. In Synechococcus elongatus (strain ATCC 33912 / PCC 7942 / FACHB-805) (Anacystis nidulans R2), this protein is Adenosylmethionine-8-amino-7-oxononanoate aminotransferase.